A 156-amino-acid polypeptide reads, in one-letter code: Small ribosomal subunit protein uS7 (156 aa).

Belongs to the universal ribosomal protein uS7 family. As to quaternary structure, part of the 30S ribosomal subunit. Contacts proteins S9 and S11.

Its function is as follows. One of the primary rRNA binding proteins, it binds directly to 16S rRNA where it nucleates assembly of the head domain of the 30S subunit. Is located at the subunit interface close to the decoding center, probably blocks exit of the E-site tRNA. The sequence is that of Small ribosomal subunit protein uS7 from Alkalilimnicola ehrlichii (strain ATCC BAA-1101 / DSM 17681 / MLHE-1).